Consider the following 663-residue polypeptide: 4-hydroxy-3-methylbut-2-en-1-yl diphosphate synthase (flavodoxin) (663 aa).

[4Fe-4S] cluster-binding residues include Cys568, Cys571, Cys602, and Glu609.

The protein belongs to the IspG family. [4Fe-4S] cluster is required as a cofactor.

It carries out the reaction (2E)-4-hydroxy-3-methylbut-2-enyl diphosphate + oxidized [flavodoxin] + H2O + 2 H(+) = 2-C-methyl-D-erythritol 2,4-cyclic diphosphate + reduced [flavodoxin]. It functions in the pathway isoprenoid biosynthesis; isopentenyl diphosphate biosynthesis via DXP pathway; isopentenyl diphosphate from 1-deoxy-D-xylulose 5-phosphate: step 5/6. Its function is as follows. Converts 2C-methyl-D-erythritol 2,4-cyclodiphosphate (ME-2,4cPP) into 1-hydroxy-2-methyl-2-(E)-butenyl 4-diphosphate. This Leptospira interrogans serogroup Icterohaemorrhagiae serovar copenhageni (strain Fiocruz L1-130) protein is 4-hydroxy-3-methylbut-2-en-1-yl diphosphate synthase (flavodoxin).